The following is a 423-amino-acid chain: Ferrochelatase, mitochondrial (423 aa).

Residues 1–29 (MISRKIISTINSKTFYNKSLSYCTVNNNK) constitute a mitochondrion transit peptide. Cys173 provides a ligand contact to [2Fe-2S] cluster. Catalysis depends on residues His207 and Asp380. Positions 401, 404, and 411 each coordinate [2Fe-2S] cluster.

It belongs to the ferrochelatase family. As to quaternary structure, monomer. [2Fe-2S] cluster serves as cofactor.

It localises to the mitochondrion inner membrane. The catalysed reaction is heme b + 2 H(+) = protoporphyrin IX + Fe(2+). The protein operates within porphyrin-containing compound metabolism; protoheme biosynthesis; protoheme from protoporphyrin-IX: step 1/1. In terms of biological role, catalyzes the ferrous insertion into protoporphyrin IX. In Dictyostelium discoideum (Social amoeba), this protein is Ferrochelatase, mitochondrial (hemH).